Consider the following 455-residue polypeptide: Guanine/hypoxanthine permease GhxQ (455 aa).

The Cytoplasmic segment spans residues 1 to 31; sequence MSGDILQTPDAPKPQGALDNYFKITARGSTV. A helical transmembrane segment spans residues 32 to 55; the sequence is RQEVLAGLTTFLAMVYSVIVVPGM. The Periplasmic portion of the chain corresponds to 56-65; that stretch reads LGKAGFPPAA. A helical membrane pass occupies residues 66–84; it reads VFVATCLVAGFGSLLMGLW. The Cytoplasmic segment spans residues 85–86; it reads AN. Residues 87–103 form a discontinuously helical membrane-spanning segment; the sequence is LPMAIGCAISLTAFTAF. Over 104–115 the chain is Periplasmic; that stretch reads SLVLGQQISVPV. A helical membrane pass occupies residues 116 to 135; that stretch reads ALGAVFLMGVIFTAISVTGV. Residues 136-147 lie on the Cytoplasmic side of the membrane; it reads RTWILRNLPMGI. Residues 148 to 168 form a helical membrane-spanning segment; it reads AHGTGIGIGLFLLLIAANGVG. The Periplasmic segment spans residues 169–186; sequence MVIKNPIEGLPVALGAFT. Residues 187–204 traverse the membrane as a helical segment; the sequence is SFPVMMSLLGLAVIFGLE. Over 205-208 the chain is Cytoplasmic; that stretch reads KCRV. The chain crosses the membrane as a helical span at residues 209 to 228; the sequence is PGGILLVIIAISIIGLIFDP. Residues 229 to 260 are Periplasmic-facing; that stretch reads AVKYHGLVAMPSLTGEDGKSLIFSLDIMGALQ. A helical membrane pass occupies residues 261–289; the sequence is PTVLPSVLALVMTAVFDATGTIRAVAGQA. The Cytoplasmic portion of the chain corresponds to 290–302; that stretch reads NLLDKDNQIINGG. Residues 303 to 318 traverse the membrane as a helical segment; sequence KALTSDSVSSIFSGLV. The Periplasmic portion of the chain corresponds to 319-320; it reads GA. The discontinuously helical transmembrane segment at 321-336 threads the bilayer; it reads APAAVYIESAAGTAAG. Residues 337 to 340 lie on the Cytoplasmic side of the membrane; it reads GKTG. A helical transmembrane segment spans residues 341–355; sequence LTATVVGALFLLILF. Topologically, residues 356–366 are periplasmic; that stretch reads LSPLSFLIPGY. Residues 367–386 form a helical membrane-spanning segment; sequence ATAPALMYVGLLMLSNVSKL. Over 387-391 the chain is Cytoplasmic; that stretch reads DFNDF. An intramembrane region (discontinuously helical) is located at residues 392 to 427; it reads IDAMAGLVCAVFIVLTCNIVTGIMLGFVTLVVGRVF. Residues 428–455 are Cytoplasmic-facing; that stretch reads AREWQKLNIGTVIITAALVAFYAGGWAI.

This sequence belongs to the nucleobase:cation symporter-2 (NCS2) (TC 2.A.40) family. Azg-like subfamily.

Its subcellular location is the cell membrane. Functionally, high-affinity transporter for guanine and hypoxanthine. This Escherichia coli (strain K12) protein is Guanine/hypoxanthine permease GhxQ (ghxQ).